Here is a 312-residue protein sequence, read N- to C-terminus: Methionyl-tRNA formyltransferase (312 aa).

Residue 109 to 112 (SLLP) coordinates (6S)-5,6,7,8-tetrahydrofolate.

The protein belongs to the Fmt family.

The catalysed reaction is L-methionyl-tRNA(fMet) + (6R)-10-formyltetrahydrofolate = N-formyl-L-methionyl-tRNA(fMet) + (6S)-5,6,7,8-tetrahydrofolate + H(+). Functionally, attaches a formyl group to the free amino group of methionyl-tRNA(fMet). The formyl group appears to play a dual role in the initiator identity of N-formylmethionyl-tRNA by promoting its recognition by IF2 and preventing the misappropriation of this tRNA by the elongation apparatus. The sequence is that of Methionyl-tRNA formyltransferase from Anaeromyxobacter sp. (strain K).